The primary structure comprises 360 residues: N5-carboxyaminoimidazole ribonucleotide synthase (360 aa).

ATP is bound by residues arginine 98, lysine 138, 143–149 (GYDGKGQ), 173–176 (EGFV), glutamate 181, histidine 204, and 255–256 (NE). Residues 102–285 (KSMFKDLGIP…QFENHLRAVA (184 aa)) enclose the ATP-grasp domain.

This sequence belongs to the PurK/PurT family. Homodimer.

The catalysed reaction is 5-amino-1-(5-phospho-beta-D-ribosyl)imidazole + hydrogencarbonate + ATP = 5-carboxyamino-1-(5-phospho-D-ribosyl)imidazole + ADP + phosphate + 2 H(+). It participates in purine metabolism; IMP biosynthesis via de novo pathway; 5-amino-1-(5-phospho-D-ribosyl)imidazole-4-carboxylate from 5-amino-1-(5-phospho-D-ribosyl)imidazole (N5-CAIR route): step 1/2. Functionally, catalyzes the ATP-dependent conversion of 5-aminoimidazole ribonucleotide (AIR) and HCO(3)(-) to N5-carboxyaminoimidazole ribonucleotide (N5-CAIR). In Pseudomonas aeruginosa (strain ATCC 15692 / DSM 22644 / CIP 104116 / JCM 14847 / LMG 12228 / 1C / PRS 101 / PAO1), this protein is N5-carboxyaminoimidazole ribonucleotide synthase.